Reading from the N-terminus, the 453-residue chain is Armadillo repeat-containing X-linked protein 1 (453 aa).

Residues 1–6 (MGRTRE) lie on the Mitochondrial intermembrane side of the membrane. Mitochondrion outer membrane (MOM)-targeting sequence stretches follow at residues 1-6 (MGRTRE) and 26-36 (RLAWGRDENEK). The helical; Signal-anchor transmembrane segment at 7–29 (AGCVAAGVVIGAGACYCVYRLAW) threads the bilayer. Topologically, residues 30–453 (GRDENEKIWD…VKVLKVLTKL (424 aa)) are cytoplasmic. A disordered region spans residues 140-182 (PSLPCPGGRGGGCHPTRSGSRAGGRASGKSKGKARSKSTRAPA). Basic residues predominate over residues 167-177 (GKSKGKARSKS). 4 ARM repeats span residues 195–235 (PYKI…NNAA), 237–276 (SFNQ…NLSV), 358–398 (PAMT…NIND), and 415–453 (SSLF…LTKL).

It belongs to the eutherian X-chromosome-specific Armcx family. As to quaternary structure, interacts with MIRO1.

It is found in the mitochondrion. The protein localises to the mitochondrion outer membrane. Functionally, regulates mitochondrial transport during axon regeneration. Increases the proportion of motile mitochondria by recruiting stationary mitochondria into the motile pool. Enhances mitochondria movement and neurite growth in both adult axons and embryonic neurons. Promotes neuronal survival and axon regeneration after nerve injury. May link mitochondria to the Trak1-kinesin motor complex via its interaction with MIRO1. The sequence is that of Armadillo repeat-containing X-linked protein 1 (ARMCX1) from Pongo abelii (Sumatran orangutan).